Consider the following 425-residue polypeptide: Metacaspase-1 (425 aa).

A disordered region spans residues 1-110 (MSYNSNPYNG…PQLPNTQTQS (110 aa)). Residues 13–28 (YPPYNTYTRPNYSPNN) show a composition bias toward low complexity. Polar residues-rich tracts occupy residues 29-38 (GSQSNNTVHQ) and 88-110 (TGANSYGNPNYSGPQLPNTQTQS). Residues H214 and C270 contribute to the active site.

The protein belongs to the peptidase C14B family.

Its subcellular location is the cytoplasm. It localises to the nucleus. Involved in cell death (apoptosis). This is Metacaspase-1 (pca1) from Schizosaccharomyces pombe (strain 972 / ATCC 24843) (Fission yeast).